The following is a 349-amino-acid chain: Isopentenyl-diphosphate delta-isomerase (349 aa).

6 to 7 (RK) lines the substrate pocket. FMN is bound by residues 62–64 (AMT), serine 93, and asparagine 122. Glutamine 152 provides a ligand contact to substrate. Residue glutamate 153 participates in Mg(2+) binding. FMN is bound by residues lysine 184, threonine 214, 258–259 (GG), and 280–281 (AG).

Belongs to the IPP isomerase type 2 family. Homooctamer. Dimer of tetramers. FMN is required as a cofactor. NADPH serves as cofactor. The cofactor is Mg(2+).

It localises to the cytoplasm. The catalysed reaction is isopentenyl diphosphate = dimethylallyl diphosphate. In terms of biological role, involved in the biosynthesis of isoprenoids. Catalyzes the 1,3-allylic rearrangement of the homoallylic substrate isopentenyl (IPP) to its allylic isomer, dimethylallyl diphosphate (DMAPP). This is Isopentenyl-diphosphate delta-isomerase from Bacillus anthracis (strain A0248).